The primary structure comprises 333 residues: Protein FAM170A (333 aa).

Disordered regions lie at residues 1–45 (MKRR…GVGE), 73–107 (LQDSSKPRSPLDQVPEGEATTAPSQQASSSCPSYK), and 143–214 (ETSE…AKTP). A compositionally biased stretch (basic and acidic residues) spans 10 to 29 (LEIEESKEAGISKSQEDISH). The span at 92–105 (TTAPSQQASSSCPS) shows a compositional bias: low complexity. Residues 143–156 (ETSESLEKQPRMEE) are compositionally biased toward basic and acidic residues. Polar residues predominate over residues 170–179 (SDVSTRNLLS). The segment covering 185–196 (GEEKEHEEKPES) has biased composition (basic and acidic residues). A Phosphothreonine modification is found at threonine 213. The segment at 224–248 (FRCMACCRVFATMESLQEHVQYGIR) adopts a C2H2-type; degenerate zinc-finger fold. A disordered region spans residues 267–333 (MESESTQEEE…RKDHCDNSGS (67 aa)). Residues 271-281 (STQEEEEDHTE) are compositionally biased toward acidic residues. The segment covering 282–293 (ETEKPKEEKAEE) has biased composition (basic and acidic residues). At serine 308 the chain carries Phosphoserine.

It belongs to the FAM170 family. Testis-specific.

It is found in the nucleus. In terms of biological role, acts as a nuclear transcription factor that positively regulates the expression of heat shock genes. Binds to heat shock promoter elements (HSE). The polypeptide is Protein FAM170A (Fam170a) (Mus musculus (Mouse)).